Here is a 291-residue protein sequence, read N- to C-terminus: Polyamine aminopropyltransferase (291 aa).

In terms of domain architecture, PABS spans 5–245; sequence PGPISLIEPL…YAVNYILGSL (241 aa). Residue Q36 participates in S-methyl-5'-thioadenosine binding. Residues H67 and E91 each coordinate spermidine. Residues D111 and 143 to 144 each bind S-methyl-5'-thioadenosine; that span reads DG. D164 serves as the catalytic Proton acceptor.

The protein belongs to the spermidine/spermine synthase family. In terms of assembly, homodimer or homotetramer.

The protein localises to the cytoplasm. The enzyme catalyses S-adenosyl 3-(methylsulfanyl)propylamine + putrescine = S-methyl-5'-thioadenosine + spermidine + H(+). It functions in the pathway amine and polyamine biosynthesis; spermidine biosynthesis; spermidine from putrescine: step 1/1. In terms of biological role, catalyzes the irreversible transfer of a propylamine group from the amino donor S-adenosylmethioninamine (decarboxy-AdoMet) to putrescine (1,4-diaminobutane) to yield spermidine. This Pyrobaculum neutrophilum (strain DSM 2338 / JCM 9278 / NBRC 100436 / V24Sta) (Thermoproteus neutrophilus) protein is Polyamine aminopropyltransferase.